A 285-amino-acid polypeptide reads, in one-letter code: MTVFADILDTVRRHEPVVHCITNYVTVNDCANMVLAAGGSPIMADDAAEVEDIVALSQALVINIGTLNSRTVESMLVAGRRANSMGKPVVLDPVGAGASALRNSTLQRLLGEVRFAAIKGNASEIGFLAGKDAKARGVDAQDSCLVTEDRLESAAATARHLSESTGAVVVVSGAIDIVAYSGGAWAVRNGHPLMARITGSGCMSAAVMGCCLGVAPYEMPQACLCAVSALGVAGEIAAETMVGGGGEMGGLGGGTGSYRALLLDAMSLLDGLALGSRADVTRIQM.

M43 is a binding site for substrate. K119 and S172 together coordinate ATP. A substrate-binding site is contributed by G199.

This sequence belongs to the Thz kinase family. It depends on Mg(2+) as a cofactor.

The catalysed reaction is 5-(2-hydroxyethyl)-4-methylthiazole + ATP = 4-methyl-5-(2-phosphooxyethyl)-thiazole + ADP + H(+). Its pathway is cofactor biosynthesis; thiamine diphosphate biosynthesis; 4-methyl-5-(2-phosphoethyl)-thiazole from 5-(2-hydroxyethyl)-4-methylthiazole: step 1/1. Its function is as follows. Catalyzes the phosphorylation of the hydroxyl group of 4-methyl-5-beta-hydroxyethylthiazole (THZ). In Desulfovibrio desulfuricans (strain ATCC 27774 / DSM 6949 / MB), this protein is Hydroxyethylthiazole kinase.